Reading from the N-terminus, the 60-residue chain is Regulatory protein DegR (60 aa).

Stabilizes the phosphorylated form of DegU, leading to enhanced production of levansucrase, alkaline protease, and neutral protease. This chain is Regulatory protein DegR (degR), found in Bacillus subtilis subsp. natto.